The chain runs to 114 residues: uncharacterized protein (114 aa).

The helical transmembrane segment at 13–30 (LYISAAGIASIYVVKTIV) threads the bilayer.

It localises to the mitochondrion outer membrane. This is an uncharacterized protein from Saccharomyces cerevisiae (strain ATCC 204508 / S288c) (Baker's yeast).